A 237-amino-acid chain; its full sequence is Ribose-5-phosphate isomerase A (237 aa).

Substrate contacts are provided by residues 32-35, 85-88, and 99-102; these read TGRT, DGAD, and KGGG. E108 (proton acceptor) is an active-site residue. R126 contacts substrate.

It belongs to the ribose 5-phosphate isomerase family. Homodimer.

It catalyses the reaction aldehydo-D-ribose 5-phosphate = D-ribulose 5-phosphate. The protein operates within carbohydrate degradation; pentose phosphate pathway; D-ribose 5-phosphate from D-ribulose 5-phosphate (non-oxidative stage): step 1/1. Catalyzes the reversible conversion of ribose-5-phosphate to ribulose 5-phosphate. This is Ribose-5-phosphate isomerase A from Aeropyrum pernix (strain ATCC 700893 / DSM 11879 / JCM 9820 / NBRC 100138 / K1).